The chain runs to 31 residues: MSTITSYFGFLLAASTITPALLIGLSKIRLI.

Residues 4-26 form a helical membrane-spanning segment; sequence ITSYFGFLLAASTITPALLIGLS.

The protein belongs to the PetL family. In terms of assembly, the 4 large subunits of the cytochrome b6-f complex are cytochrome b6, subunit IV (17 kDa polypeptide, PetD), cytochrome f and the Rieske protein, while the 4 small subunits are PetG, PetL, PetM and PetN. The complex functions as a dimer.

The protein localises to the plastid. The protein resides in the chloroplast thylakoid membrane. Functionally, component of the cytochrome b6-f complex, which mediates electron transfer between photosystem II (PSII) and photosystem I (PSI), cyclic electron flow around PSI, and state transitions. PetL is important for photoautotrophic growth as well as for electron transfer efficiency and stability of the cytochrome b6-f complex. This chain is Cytochrome b6-f complex subunit 6, found in Liriodendron tulipifera (Tuliptree).